The chain runs to 507 residues: ATP synthase subunit alpha, chloroplastic (507 aa).

Gly-170 to Thr-177 is an ATP binding site. Thr-257 is modified (phosphothreonine).

This sequence belongs to the ATPase alpha/beta chains family. In terms of assembly, F-type ATPases have 2 components, CF(1) - the catalytic core - and CF(0) - the membrane proton channel. CF(1) has five subunits: alpha(3), beta(3), gamma(1), delta(1), epsilon(1). CF(0) has four main subunits: a, b, b' and c.

It localises to the plastid. Its subcellular location is the chloroplast thylakoid membrane. The enzyme catalyses ATP + H2O + 4 H(+)(in) = ADP + phosphate + 5 H(+)(out). In terms of biological role, produces ATP from ADP in the presence of a proton gradient across the membrane. The alpha chain is a regulatory subunit. This Aethionema cordifolium (Lebanon stonecress) protein is ATP synthase subunit alpha, chloroplastic.